The primary structure comprises 344 residues: Heat-inducible transcription repressor HrcA (344 aa).

This sequence belongs to the HrcA family.

Its function is as follows. Negative regulator of class I heat shock genes (grpE-dnaK-dnaJ and groELS operons). Prevents heat-shock induction of these operons. This is Heat-inducible transcription repressor HrcA from Anoxybacillus flavithermus (strain DSM 21510 / WK1).